Here is a 190-residue protein sequence, read N- to C-terminus: Protein GrpE (190 aa).

The segment covering 1 to 31 (MTEEQKKYEDAENLESKSENPEEASAEKSEN) has biased composition (basic and acidic residues). Positions 1–39 (MTEEQKKYEDAENLESKSENPEEASAEKSENGVEDLQAE) are disordered.

The protein belongs to the GrpE family. Homodimer.

Its subcellular location is the cytoplasm. In terms of biological role, participates actively in the response to hyperosmotic and heat shock by preventing the aggregation of stress-denatured proteins, in association with DnaK and GrpE. It is the nucleotide exchange factor for DnaK and may function as a thermosensor. Unfolded proteins bind initially to DnaJ; upon interaction with the DnaJ-bound protein, DnaK hydrolyzes its bound ATP, resulting in the formation of a stable complex. GrpE releases ADP from DnaK; ATP binding to DnaK triggers the release of the substrate protein, thus completing the reaction cycle. Several rounds of ATP-dependent interactions between DnaJ, DnaK and GrpE are required for fully efficient folding. The polypeptide is Protein GrpE (Zymomonas mobilis subsp. mobilis (strain ATCC 31821 / ZM4 / CP4)).